The primary structure comprises 194 residues: Ribonuclease HII (194 aa).

Residues C16–C194 enclose the RNase H type-2 domain. Residues D22, E23, and D113 each contribute to the a divalent metal cation site.

It belongs to the RNase HII family. Mn(2+) is required as a cofactor. It depends on Mg(2+) as a cofactor.

It is found in the cytoplasm. It catalyses the reaction Endonucleolytic cleavage to 5'-phosphomonoester.. In terms of biological role, endonuclease that specifically degrades the RNA of RNA-DNA hybrids. The sequence is that of Ribonuclease HII from Rickettsia massiliae (strain Mtu5).